Reading from the N-terminus, the 40-residue chain is Large ribosomal subunit protein bL36 (40 aa).

It belongs to the bacterial ribosomal protein bL36 family.

This chain is Large ribosomal subunit protein bL36, found in Corynebacterium glutamicum (strain R).